Consider the following 309-residue polypeptide: NAD kinase (309 aa).

The active-site Proton acceptor is Asp-89. Residues 89–90, 163–164, His-174, Arg-191, Asp-193, and 204–209 each bind NAD(+); these read DG, NE, and TAYSLS.

It belongs to the NAD kinase family. It depends on a divalent metal cation as a cofactor.

It is found in the cytoplasm. The catalysed reaction is NAD(+) + ATP = ADP + NADP(+) + H(+). In terms of biological role, involved in the regulation of the intracellular balance of NAD and NADP, and is a key enzyme in the biosynthesis of NADP. Catalyzes specifically the phosphorylation on 2'-hydroxyl of the adenosine moiety of NAD to yield NADP. This Shewanella piezotolerans (strain WP3 / JCM 13877) protein is NAD kinase.